We begin with the raw amino-acid sequence, 20 residues long: Cytochrome c oxidase subunit 8B, mitochondrial (20 aa).

It belongs to the cytochrome c oxidase VIII family. In terms of assembly, component of the cytochrome c oxidase (complex IV, CIV), a multisubunit enzyme composed of 14 subunits. The complex is composed of a catalytic core of 3 subunits MT-CO1, MT-CO2 and MT-CO3, encoded in the mitochondrial DNA, and 11 supernumerary subunits COX4I, COX5A, COX5B, COX6A, COX6B, COX6C, COX7A, COX7B, COX7C, COX8 and NDUFA4, which are encoded in the nuclear genome. The complex exists as a monomer or a dimer and forms supercomplexes (SCs) in the inner mitochondrial membrane with NADH-ubiquinone oxidoreductase (complex I, CI) and ubiquinol-cytochrome c oxidoreductase (cytochrome b-c1 complex, complex III, CIII), resulting in different assemblies (supercomplex SCI(1)III(2)IV(1) and megacomplex MCI(2)III(2)IV(2)).

The protein localises to the mitochondrion inner membrane. It participates in energy metabolism; oxidative phosphorylation. Component of the cytochrome c oxidase, the last enzyme in the mitochondrial electron transport chain which drives oxidative phosphorylation. The respiratory chain contains 3 multisubunit complexes succinate dehydrogenase (complex II, CII), ubiquinol-cytochrome c oxidoreductase (cytochrome b-c1 complex, complex III, CIII) and cytochrome c oxidase (complex IV, CIV), that cooperate to transfer electrons derived from NADH and succinate to molecular oxygen, creating an electrochemical gradient over the inner membrane that drives transmembrane transport and the ATP synthase. Cytochrome c oxidase is the component of the respiratory chain that catalyzes the reduction of oxygen to water. Electrons originating from reduced cytochrome c in the intermembrane space (IMS) are transferred via the dinuclear copper A center (CU(A)) of subunit 2 and heme A of subunit 1 to the active site in subunit 1, a binuclear center (BNC) formed by heme A3 and copper B (CU(B)). The BNC reduces molecular oxygen to 2 water molecules using 4 electrons from cytochrome c in the IMS and 4 protons from the mitochondrial matrix. This is Cytochrome c oxidase subunit 8B, mitochondrial from Thunnus obesus (Bigeye tuna).